The sequence spans 61 residues: Probable tautomerase lmo2564 (61 aa).

Pro-2 (proton acceptor; via imino nitrogen) is an active-site residue.

Belongs to the 4-oxalocrotonate tautomerase family.

The polypeptide is Probable tautomerase lmo2564 (Listeria monocytogenes serovar 1/2a (strain ATCC BAA-679 / EGD-e)).